A 281-amino-acid chain; its full sequence is Release factor glutamine methyltransferase (281 aa).

S-adenosyl-L-methionine-binding residues include Glu-142 and Asn-184. Residue 184 to 187 (NPPY) participates in substrate binding. Residues 261-281 (AADHPDLNNRPRFATARKALP) form a disordered region.

The protein belongs to the protein N5-glutamine methyltransferase family. PrmC subfamily.

It catalyses the reaction L-glutaminyl-[peptide chain release factor] + S-adenosyl-L-methionine = N(5)-methyl-L-glutaminyl-[peptide chain release factor] + S-adenosyl-L-homocysteine + H(+). In terms of biological role, methylates the class 1 translation termination release factors RF1/PrfA and RF2/PrfB on the glutamine residue of the universally conserved GGQ motif. The sequence is that of Release factor glutamine methyltransferase from Streptomyces coelicolor (strain ATCC BAA-471 / A3(2) / M145).